The chain runs to 315 residues: Protein translocase subunit SecF (315 aa).

A run of 6 helical transmembrane segments spans residues 12–32, 136–156, 166–186, 188–208, 247–267, and 271–291; these read AWIV…ISWA, ALFR…IIYL, VFAI…FAIF, LVGG…IIGF, SINT…FGGD, and FFAL…IFMA.

This sequence belongs to the SecD/SecF family. SecF subfamily. Forms a complex with SecD. Part of the essential Sec protein translocation apparatus which comprises SecA, SecYEG and auxiliary proteins SecDF. Other proteins may also be involved.

The protein resides in the cell inner membrane. Its function is as follows. Part of the Sec protein translocase complex. Interacts with the SecYEG preprotein conducting channel. SecDF uses the proton motive force (PMF) to complete protein translocation after the ATP-dependent function of SecA. Probably participates in protein translocation into and across both the cytoplasmic and thylakoid membranes in cyanobacterial cells. In Synechocystis sp. (strain ATCC 27184 / PCC 6803 / Kazusa), this protein is Protein translocase subunit SecF.